The following is a 389-amino-acid chain: Chalcone synthase 2 (389 aa).

Cysteine 164 is an active-site residue.

This sequence belongs to the thiolase-like superfamily. Chalcone/stilbene synthases family.

The enzyme catalyses (E)-4-coumaroyl-CoA + 3 malonyl-CoA + 3 H(+) = 2',4,4',6'-tetrahydroxychalcone + 3 CO2 + 4 CoA. The protein operates within secondary metabolite biosynthesis; flavonoid biosynthesis. In terms of biological role, the primary product of this enzyme is 4,2',4',6'-tetrahydroxychalcone (also termed naringenin-chalcone or chalcone) which can under specific conditions spontaneously isomerize into naringenin. The polypeptide is Chalcone synthase 2 (CHS2) (Trifolium subterraneum (Subterranean clover)).